A 534-amino-acid chain; its full sequence is Cytochalasin cluster regulator ccsR (534 aa).

The zn(2)-C6 fungal-type DNA-binding region spans 13–54; that stretch reads CDRCRRQKLRCVRPLKHGACEHPNNIEALEPCERCSRAGTPC. Disordered stretches follow at residues 88–170 and 350–378; these read IPKQ…LDAP and TSAR…SAAS. Over residues 109–125 the composition is skewed to polar residues; sequence TGQNKGINDANAVTGSL. Residues 130 to 146 show a composition bias toward basic and acidic residues; it reads PDHRSGSNVHRQPEARP. Low complexity predominate over residues 361–378; it reads DMCASSSNRDSSDLSAAS.

The protein localises to the nucleus. Its function is as follows. Transcription factor involved in regulation of gene cluster that mediates the biosynthesis of the mycotoxins cytochalasins E and K. This is Cytochalasin cluster regulator ccsR from Aspergillus clavatus (strain ATCC 1007 / CBS 513.65 / DSM 816 / NCTC 3887 / NRRL 1 / QM 1276 / 107).